The chain runs to 433 residues: Trigger factor (433 aa).

The region spanning 161–246 (GDRVTMDFVG…AKKVEARDLP (86 aa)) is the PPIase FKBP-type domain.

This sequence belongs to the FKBP-type PPIase family. Tig subfamily.

Its subcellular location is the cytoplasm. It catalyses the reaction [protein]-peptidylproline (omega=180) = [protein]-peptidylproline (omega=0). Functionally, involved in protein export. Acts as a chaperone by maintaining the newly synthesized protein in an open conformation. Functions as a peptidyl-prolyl cis-trans isomerase. The chain is Trigger factor from Idiomarina loihiensis (strain ATCC BAA-735 / DSM 15497 / L2-TR).